A 95-amino-acid polypeptide reads, in one-letter code: Aspartyl/glutamyl-tRNA(Asn/Gln) amidotransferase subunit C (95 aa).

It belongs to the GatC family. In terms of assembly, heterotrimer of A, B and C subunits.

The catalysed reaction is L-glutamyl-tRNA(Gln) + L-glutamine + ATP + H2O = L-glutaminyl-tRNA(Gln) + L-glutamate + ADP + phosphate + H(+). It carries out the reaction L-aspartyl-tRNA(Asn) + L-glutamine + ATP + H2O = L-asparaginyl-tRNA(Asn) + L-glutamate + ADP + phosphate + 2 H(+). Allows the formation of correctly charged Asn-tRNA(Asn) or Gln-tRNA(Gln) through the transamidation of misacylated Asp-tRNA(Asn) or Glu-tRNA(Gln) in organisms which lack either or both of asparaginyl-tRNA or glutaminyl-tRNA synthetases. The reaction takes place in the presence of glutamine and ATP through an activated phospho-Asp-tRNA(Asn) or phospho-Glu-tRNA(Gln). This is Aspartyl/glutamyl-tRNA(Asn/Gln) amidotransferase subunit C from Allorhizobium ampelinum (strain ATCC BAA-846 / DSM 112012 / S4) (Agrobacterium vitis (strain S4)).